A 348-amino-acid chain; its full sequence is Carbamoyl phosphate synthase small chain (348 aa).

The CPSase stretch occupies residues 1-167 (MKRYLITSDG…VKNIRGKGER (167 aa)). 3 residues coordinate L-glutamine: Ser-45, Gly-213, and Gly-215. Positions 168–348 (RILFIDLGSK…RRRTEDAAKG (181 aa)) constitute a Glutamine amidotransferase type-1 domain. Residue Cys-242 is the Nucleophile of the active site. L-glutamine contacts are provided by Phe-243, Gln-246, Asn-282, Gly-284, and Tyr-285. Active-site residues include His-321 and Glu-323.

This sequence belongs to the CarA family. Composed of two chains; the small (or glutamine) chain promotes the hydrolysis of glutamine to ammonia, which is used by the large (or ammonia) chain to synthesize carbamoyl phosphate. Tetramer of heterodimers (alpha,beta)4.

It carries out the reaction hydrogencarbonate + L-glutamine + 2 ATP + H2O = carbamoyl phosphate + L-glutamate + 2 ADP + phosphate + 2 H(+). It catalyses the reaction L-glutamine + H2O = L-glutamate + NH4(+). It participates in amino-acid biosynthesis; L-arginine biosynthesis; carbamoyl phosphate from bicarbonate: step 1/1. It functions in the pathway pyrimidine metabolism; UMP biosynthesis via de novo pathway; (S)-dihydroorotate from bicarbonate: step 1/3. In terms of biological role, small subunit of the glutamine-dependent carbamoyl phosphate synthetase (CPSase). CPSase catalyzes the formation of carbamoyl phosphate from the ammonia moiety of glutamine, carbonate, and phosphate donated by ATP, constituting the first step of 2 biosynthetic pathways, one leading to arginine and/or urea and the other to pyrimidine nucleotides. The small subunit (glutamine amidotransferase) binds and cleaves glutamine to supply the large subunit with the substrate ammonia. The protein is Carbamoyl phosphate synthase small chain of Thermoplasma acidophilum (strain ATCC 25905 / DSM 1728 / JCM 9062 / NBRC 15155 / AMRC-C165).